A 421-amino-acid chain; its full sequence is Histidine--tRNA ligase (421 aa).

This sequence belongs to the class-II aminoacyl-tRNA synthetase family. Homodimer.

Its subcellular location is the cytoplasm. The catalysed reaction is tRNA(His) + L-histidine + ATP = L-histidyl-tRNA(His) + AMP + diphosphate + H(+). This Coxiella burnetii (strain Dugway 5J108-111) protein is Histidine--tRNA ligase.